A 328-amino-acid chain; its full sequence is DNA-directed RNA polymerase subunit alpha (328 aa).

The segment at 1-231 (MIQQMQMPEK…DHVRLFSLFS (231 aa)) is alpha N-terminal domain (alpha-NTD). The segment at 252-328 (MRKLLMTRIE…MEVTKYRLNQ (77 aa)) is alpha C-terminal domain (alpha-CTD).

This sequence belongs to the RNA polymerase alpha chain family. In terms of assembly, homodimer. The RNAP catalytic core consists of 2 alpha, 1 beta, 1 beta' and 1 omega subunit. When a sigma factor is associated with the core the holoenzyme is formed, which can initiate transcription.

The catalysed reaction is RNA(n) + a ribonucleoside 5'-triphosphate = RNA(n+1) + diphosphate. Its function is as follows. DNA-dependent RNA polymerase catalyzes the transcription of DNA into RNA using the four ribonucleoside triphosphates as substrates. In Chloroherpeton thalassium (strain ATCC 35110 / GB-78), this protein is DNA-directed RNA polymerase subunit alpha.